A 116-amino-acid polypeptide reads, in one-letter code: Large ribosomal subunit protein bL17 (116 aa).

Belongs to the bacterial ribosomal protein bL17 family. Part of the 50S ribosomal subunit. Contacts protein L32.

This is Large ribosomal subunit protein bL17 from Prochlorococcus marinus (strain MIT 9515).